Reading from the N-terminus, the 151-residue chain is Probable cGMP 3',5'-cyclic phosphodiesterase subunit delta (151 aa).

This sequence belongs to the PDE6D/unc-119 family. Interacts with Pde6.

It localises to the nucleus. Its subcellular location is the cytoplasm. This chain is Probable cGMP 3',5'-cyclic phosphodiesterase subunit delta, found in Drosophila erecta (Fruit fly).